The following is a 239-amino-acid chain: MATPHINAEMGDFADVVLMPGDPLRAKHIADTFLQDAVEVNNVRGMLGYTGTYKGRKISVMGHGMGIPSCSIYAKELITEFGVKKIIRVGSCGAVRTDVKLRDVVIGMGACTDSKVNRMRFKDHDFAAIADFDMVRNAVDAAQALGVKARVGNIFSADLFYTPDPQMFDVMEKYGVLGVEMEAAGIYGVAAEFGAKALAICTVSDHIRTHEQTTAAERQTTFSEMIEIALESVLLGDKA.

Position 5 (His5) interacts with a purine D-ribonucleoside. Residues Gly21, Arg25, Arg44, and 88 to 91 (RVGS) each bind phosphate. Residues 180-182 (EME) and 204-205 (SD) contribute to the a purine D-ribonucleoside site. The active-site Proton donor is Asp205.

This sequence belongs to the PNP/UDP phosphorylase family. As to quaternary structure, homohexamer; trimer of homodimers.

It catalyses the reaction a purine D-ribonucleoside + phosphate = a purine nucleobase + alpha-D-ribose 1-phosphate. The enzyme catalyses a purine 2'-deoxy-D-ribonucleoside + phosphate = a purine nucleobase + 2-deoxy-alpha-D-ribose 1-phosphate. Catalyzes the reversible phosphorolytic breakdown of the N-glycosidic bond in the beta-(deoxy)ribonucleoside molecules, with the formation of the corresponding free purine bases and pentose-1-phosphate. The polypeptide is Purine nucleoside phosphorylase DeoD-type (Erwinia tasmaniensis (strain DSM 17950 / CFBP 7177 / CIP 109463 / NCPPB 4357 / Et1/99)).